A 248-amino-acid chain; its full sequence is ATP synthase subunit a, chloroplastic (248 aa).

Transmembrane regions (helical) follow at residues 37–57, 96–116, 135–155, 200–220, and 221–241; these read AQVLITSWVVIVLLSGLAFVT, VPFIGTLFLFIFVSNWSGALF, INTTVALALLTSVAYFYAGLH, LVVAVLISLVPLVVPIPMMFL, and GLFTSAIQALIFATLAAAYIG.

This sequence belongs to the ATPase A chain family. In terms of assembly, F-type ATPases have 2 components, CF(1) - the catalytic core - and CF(0) - the membrane proton channel. CF(1) has five subunits: alpha(3), beta(3), gamma(1), delta(1), epsilon(1). CF(0) has four main subunits: a, b, b' and c.

The protein localises to the plastid. It localises to the chloroplast thylakoid membrane. Its function is as follows. Key component of the proton channel; it plays a direct role in the translocation of protons across the membrane. The polypeptide is ATP synthase subunit a, chloroplastic (Psilotum nudum (Whisk fern)).